A 38-amino-acid polypeptide reads, in one-letter code: Large ribosomal subunit protein bL36 (38 aa).

Belongs to the bacterial ribosomal protein bL36 family.

In Paraburkholderia phymatum (strain DSM 17167 / CIP 108236 / LMG 21445 / STM815) (Burkholderia phymatum), this protein is Large ribosomal subunit protein bL36.